A 147-amino-acid chain; its full sequence is Mineralocorticoid receptor (147 aa).

One can recognise an NR LBD domain in the interval 1-147 (FALSWRSYKH…SQALKVEFPA (147 aa)). 21-hydroxyprogesterone is bound by residues R6 and T134. Aldosterone is bound by residues R6 and T134. 2 residues coordinate progesterone: R6 and T134.

It belongs to the nuclear hormone receptor family. NR3 subfamily.

The protein resides in the cytoplasm. It is found in the nucleus. Its function is as follows. Receptor for both mineralocorticoids (MC) such as aldosterone and glucocorticoids (GC) such as corticosterone or cortisol. Binds to mineralocorticoid response elements (MRE) and transactivates target genes. The effect of MC is to increase ion and water transport and thus raise extracellular fluid volume and blood pressure and lower potassium levels. This is Mineralocorticoid receptor (NR3C2) from Gallus gallus (Chicken).